Reading from the N-terminus, the 149-residue chain is Detocs response regulatory protein DtcB (149 aa).

The 134-residue stretch at 1 to 134 (MILIVEDDAH…DIEACYYDHN (134 aa)) folds into the Response regulatory domain. Residue Asp-53 is modified to 4-aspartylphosphate.

Post-translationally, probably phosphorylated by DtcA.

Possible phosphate scavenger member of the two-component regulatory system Detocs that confers resistance to bacteriophage. When the system (DtcA-DtcB-DtcC) is expressed in a susceptible E.coli (strain MG1655) it confers resistance to bacteriophages T2, T4, T5, T6 and SECphi27. Detocs inhibits T5 infection leading to growth arrest but not complete cell lysis, during SECphi27 infection leads to cell lysis. Overexpression of this protein along with the intact Detocs locus cancels T5 immunity; when the phosphate-receiving Asp-53 is mutated to Ala in this protein, immunity is restored. DtcA probably autophosphorylates upon sensing viral infection, and subsequently transfers the phosphate signal to DtcC which activates it, leading to an antiviral defense; DtcB (this subunit) may scavenge phosphorylation signals from accidental activation of DtcA. The chain is Detocs response regulatory protein DtcB from Vibrio alginolyticus.